We begin with the raw amino-acid sequence, 1244 residues long: ATP-dependent RNA helicase DHX8 (1244 aa).

Residue lysine 140 forms a Glycyl lysine isopeptide (Lys-Gly) (interchain with G-Cter in SUMO2) linkage. Disordered regions lie at residues leucine 152–glycine 289 and aspartate 361–histidine 396. The span at glutamate 160–aspartate 169 shows a compositional bias: basic and acidic residues. A compositionally biased stretch (basic residues) spans arginine 170–serine 179. Residues arginine 180–arginine 220 show a composition bias toward basic and acidic residues. The segment covering aspartate 221–serine 234 has biased composition (basic residues). Positions phenylalanine 256–proline 283 are enriched in basic and acidic residues. Positions glycine 289 to lysine 360 constitute an S1 motif domain. The segment covering threonine 386–threonine 395 has biased composition (basic and acidic residues). Serine 419 carries the post-translational modification Phosphoserine. Lysine 423 participates in a covalent cross-link: Glycyl lysine isopeptide (Lys-Gly) (interchain with G-Cter in SUMO2). A Phosphoserine modification is found at serine 484. Residues valine 599–proline 762 form the Helicase ATP-binding domain. Glycine 612 to threonine 619 provides a ligand contact to ATP. Positions aspartate 709 to histidine 712 match the DEAH box motif. The Helicase C-terminal domain occupies tyrosine 780–glycine 960.

The protein belongs to the DEAD box helicase family. DEAH subfamily. DDX8/PRP22 sub-subfamily. As to quaternary structure, identified in the spliceosome C complex. Interacts with ARRB2; the interaction is detected in the nucleus upon OR1D2 stimulation. Interacts with SRRM2. Interacts with CACTIN.

It is found in the nucleus. The catalysed reaction is ATP + H2O = ADP + phosphate + H(+). In terms of biological role, involved in pre-mRNA splicing as component of the spliceosome. Facilitates nuclear export of spliced mRNA by releasing the RNA from the spliceosome. The sequence is that of ATP-dependent RNA helicase DHX8 (Dhx8) from Mus musculus (Mouse).